A 227-amino-acid polypeptide reads, in one-letter code: UPF0758 protein lpl2409 (227 aa).

Residues 102–225 (RLSNTQQTYA…YSIFAENKWA (124 aa)) enclose the MPN domain. His173, His175, and Asp186 together coordinate Zn(2+). The JAMM motif signature appears at 173–186 (HNHPSGLSDASQQD).

Belongs to the UPF0758 family.

The sequence is that of UPF0758 protein lpl2409 from Legionella pneumophila (strain Lens).